The sequence spans 90 residues: UPF0213 protein lwe0147 (90 aa).

The GIY-YIG domain maps to 5–83 (NEHFFYVLKC…SRKNKDSYLI (79 aa)).

Belongs to the UPF0213 family.

In Listeria welshimeri serovar 6b (strain ATCC 35897 / DSM 20650 / CCUG 15529 / CIP 8149 / NCTC 11857 / SLCC 5334 / V8), this protein is UPF0213 protein lwe0147.